A 347-amino-acid polypeptide reads, in one-letter code: Ribosomal RNA large subunit methyltransferase M (347 aa).

Residues Ser-184, 217–220, Asp-236, Asp-256, and Asp-272 contribute to the S-adenosyl-L-methionine site; that span reads APGG. The Proton acceptor role is filled by Lys-301.

This sequence belongs to the class I-like SAM-binding methyltransferase superfamily. RNA methyltransferase RlmE family. RlmM subfamily. In terms of assembly, monomer.

The protein resides in the cytoplasm. It catalyses the reaction cytidine(2498) in 23S rRNA + S-adenosyl-L-methionine = 2'-O-methylcytidine(2498) in 23S rRNA + S-adenosyl-L-homocysteine + H(+). Catalyzes the 2'-O-methylation at nucleotide C2498 in 23S rRNA. This is Ribosomal RNA large subunit methyltransferase M from Xanthomonas oryzae pv. oryzae (strain PXO99A).